The primary structure comprises 394 residues: Class II hydrophobin TH1 (394 aa).

The N-terminal stretch at 1 to 16 (MKFLAAASLLVASTLA) is a signal peptide. Residues 17–42 (VPTSSGGSCRPRPPPGGGNGGNGGNG) form a disordered region. The span at 33–42 (GGNGGNGGNG) shows a compositional bias: gly residues. The tract at residues 48 to 117 (GYQPCPAGLY…GQAVLCQDSI (70 aa)) is hydrophobin 1. 4 disulfide bridges follow: cysteine 52–cysteine 101, cysteine 62–cysteine 92, cysteine 63–cysteine 75, and cysteine 102–cysteine 113. Residues 135–157 (GNGGNNGGNTDYPGGNGGNNGGN) are disordered. A compositionally biased stretch (gly residues) spans 148 to 157 (GGNGGNNGGN). Hydrophobin stretches follow at residues 200–270 (GYQA…QPAI) and 326–394 (GSFK…CTGA).

Belongs to the cerato-ulmin hydrophobin family. In terms of assembly, homotetramer. Further self-assembles to form highly ordered films at water-air interfaces through intermolecular interactions. Several N-termini starting at positions 17, 20, 22, 28 and 48 have been identified by direct sequencing. Post-translationally, contains a number of intrachain disulfide bonds. In terms of processing, not glycosylated.

It localises to the secreted. The protein resides in the cell wall. Its function is as follows. Aerial growth, conidiation, and dispersal of filamentous fungi in the environment rely upon a capability of their secreting small amphipathic proteins called hydrophobins (HPBs) with low sequence identity. Class I can self-assemble into an outermost layer of rodlet bundles on aerial cell surfaces, conferring cellular hydrophobicity that supports fungal growth, development and dispersal; whereas Class II form highly ordered films at water-air interfaces through intermolecular interactions but contribute nothing to the rodlet structure. TH1 is a class II hydrophobin that reduces water surface tension dramatically upon assembly at the water-air interface and plays a role in the formation of aerial hyphae. The sequence is that of Class II hydrophobin TH1 (TH1) from Claviceps fusiformis (Ergot fungus).